The sequence spans 166 residues: Large ribosomal subunit protein uL10 (166 aa).

Belongs to the universal ribosomal protein uL10 family. As to quaternary structure, part of the ribosomal stalk of the 50S ribosomal subunit. The N-terminus interacts with L11 and the large rRNA to form the base of the stalk. The C-terminus forms an elongated spine to which L12 dimers bind in a sequential fashion forming a multimeric L10(L12)X complex.

Forms part of the ribosomal stalk, playing a central role in the interaction of the ribosome with GTP-bound translation factors. This is Large ribosomal subunit protein uL10 from Alkaliphilus metalliredigens (strain QYMF).